The following is a 331-amino-acid chain: DNA-directed RNA polymerase subunit alpha (331 aa).

Residues 1 to 235 (MTMHIRWRGM…KHLNPFVQYR (235 aa)) form an alpha N-terminal domain (alpha-NTD) region. An alpha C-terminal domain (alpha-CTD) region spans residues 255–331 (QLEAKLNMTL…GMRVPNQPLF (77 aa)).

Belongs to the RNA polymerase alpha chain family. In terms of assembly, homodimer. The RNAP catalytic core consists of 2 alpha, 1 beta, 1 beta' and 1 omega subunit. When a sigma factor is associated with the core the holoenzyme is formed, which can initiate transcription.

It catalyses the reaction RNA(n) + a ribonucleoside 5'-triphosphate = RNA(n+1) + diphosphate. In terms of biological role, DNA-dependent RNA polymerase catalyzes the transcription of DNA into RNA using the four ribonucleoside triphosphates as substrates. The protein is DNA-directed RNA polymerase subunit alpha of Rhodopirellula baltica (strain DSM 10527 / NCIMB 13988 / SH1).